The chain runs to 283 residues: Urease accessory protein UreD (283 aa).

Residues 1-20 are disordered; sequence MTQTQPVGTLRLTIDDQGPQ.

Belongs to the UreD family. As to quaternary structure, ureD, UreF and UreG form a complex that acts as a GTP-hydrolysis-dependent molecular chaperone, activating the urease apoprotein by helping to assemble the nickel containing metallocenter of UreC. The UreE protein probably delivers the nickel.

It is found in the cytoplasm. Functionally, required for maturation of urease via the functional incorporation of the urease nickel metallocenter. This Corynebacterium glutamicum (strain R) protein is Urease accessory protein UreD.